A 275-amino-acid chain; its full sequence is Large ribosomal subunit protein uL2 (275 aa).

Disordered regions lie at residues 34–59 (LEKK…GGHK) and 223–275 (VAMN…RNKK).

The protein belongs to the universal ribosomal protein uL2 family. As to quaternary structure, part of the 50S ribosomal subunit. Forms a bridge to the 30S subunit in the 70S ribosome.

Functionally, one of the primary rRNA binding proteins. Required for association of the 30S and 50S subunits to form the 70S ribosome, for tRNA binding and peptide bond formation. It has been suggested to have peptidyltransferase activity; this is somewhat controversial. Makes several contacts with the 16S rRNA in the 70S ribosome. The sequence is that of Large ribosomal subunit protein uL2 from Teredinibacter turnerae (strain ATCC 39867 / T7901).